Reading from the N-terminus, the 412-residue chain is Putative competence-damage inducible protein (412 aa).

It belongs to the CinA family.

The sequence is that of Putative competence-damage inducible protein from Bacillus cereus (strain ATCC 10987 / NRS 248).